The primary structure comprises 292 residues: 33 kDa chaperonin (292 aa).

Cystine bridges form between Cys-229-Cys-231 and Cys-262-Cys-265.

The protein belongs to the HSP33 family. Under oxidizing conditions two disulfide bonds are formed involving the reactive cysteines. Under reducing conditions zinc is bound to the reactive cysteines and the protein is inactive.

It is found in the cytoplasm. Functionally, redox regulated molecular chaperone. Protects both thermally unfolding and oxidatively damaged proteins from irreversible aggregation. Plays an important role in the bacterial defense system toward oxidative stress. The protein is 33 kDa chaperonin of Photobacterium profundum (strain SS9).